The primary structure comprises 1040 residues: Multidrug resistance protein MdtB (1040 aa).

A run of 11 helical transmembrane segments spans residues 15 to 37, 343 to 365, 369 to 391, 398 to 420, 440 to 462, 474 to 496, 535 to 557, 867 to 889, 909 to 931, 968 to 990, and 1000 to 1022; these read LFIL…GIIG, VQFE…LRNA, LIPS…FLGF, LMAL…ENIA, IGFT…LFMG, VTLA…MMCA, HPWL…YIWI, VWLI…ESFI, LMMA…IGIV, ILMT…GVGA, and MVGG…YLLF.

It belongs to the resistance-nodulation-cell division (RND) (TC 2.A.6) family. MdtB subfamily. Part of a tripartite efflux system composed of MdtA, MdtB and MdtC. MdtB forms a heteromultimer with MdtC.

It is found in the cell inner membrane. In Pectobacterium atrosepticum (strain SCRI 1043 / ATCC BAA-672) (Erwinia carotovora subsp. atroseptica), this protein is Multidrug resistance protein MdtB.